The primary structure comprises 681 residues: DNA-directed RNA polymerase subunit beta' (681 aa).

Residues Cys-69, Cys-71, Cys-87, and Cys-90 each coordinate Zn(2+). Mg(2+) is bound by residues Asp-489, Asp-491, and Asp-493.

Belongs to the RNA polymerase beta' chain family. RpoC1 subfamily. As to quaternary structure, in plastids the minimal PEP RNA polymerase catalytic core is composed of four subunits: alpha, beta, beta', and beta''. When a (nuclear-encoded) sigma factor is associated with the core the holoenzyme is formed, which can initiate transcription. The cofactor is Mg(2+). It depends on Zn(2+) as a cofactor.

The protein localises to the plastid. It is found in the chloroplast. The catalysed reaction is RNA(n) + a ribonucleoside 5'-triphosphate = RNA(n+1) + diphosphate. In terms of biological role, DNA-dependent RNA polymerase catalyzes the transcription of DNA into RNA using the four ribonucleoside triphosphates as substrates. This chain is DNA-directed RNA polymerase subunit beta', found in Anthoceros angustus (Hornwort).